The following is a 953-amino-acid chain: MNQEYIKVRGAKEHNLKNINVDIPRNKFVVITGLSGSGKSSLAFDTIYAEGQRRYVESLSSYARQFLHLQNKPNVESISGLSPAIAIDQKTTSKNPRSTVGTITEIYDYLRLLYARVGIPYSPVTSLPIHSQTVAEMVDIINELPKGTKVYLLAPIVRGHKGEFKREIMNLKKQGFQKLIVNGEVCEIDDLPKLDKNKKHNIEVIVDRIVLDENLGNRLADSLESSLNLADGITYLEIVELPQAVKSQFEKNQRITFSEKYSCPVSGFQLTEIEPRIFSFNSPFGACPKCEGIGKEFFFDRDLIVQDQRISIKDGAIVPWGSTSSKFILETLKALADHYKFSIEVPFISLSQSVKDILFEGSGEEEIKFEFHDGSKTQIIKQPFAGIIPSLQEKDRTIESVLIKEELAKFKSEHKCTACSGFRLKDEALCVKIANLHIGEVAGMSIAALQKWFIHLEEKLNQKQLFIAKRILKEINERLKFLMNVGLDYLTLSREAGTLSGGESQRIRLASQIGSGLSGVLYVLDEPSIGLHQRDNTRLIATLKRLRDLGNTVLVVEHDEETMYEADHIIDIGPGAGIHGGRVIAEGNAEKIKHFEESITGRYLSGRQTIKVPSETRVGHDNRAIELLGAVSNNLDNVDIKIPLGTFTAITGVSGSGKSSLMIHTLYKAALKHLEPTSKVFPGKYRELKGLEYIDKIIDINQSPIGRTPRSNPATYTGAFTHIRDWFVELPESKARGYKVGRFSFNVKGGRCEACQGDGLIKIEMHFLPDVYVKCDICNGHRYNRETLEIKYKGKSIADILMMTVEDAMQFFDKIPLIYEKLITLNEVGLGYIKIGQSATTLSGGEAQRVKLAKELSRRSTGKTLYILDEPTTGLHIDDIKKLLKVLHKLVDMGNTVLVIEHNLDVIKTADYIIDVGPEGGDKGGKIVVCGTPTDIAACKESHTGRYLKQYLI.

33-40 contributes to the ATP binding site; sequence GLSGSGKS. ABC transporter domains are found at residues 320–599 and 619–949; these read WGST…EESI and GHDN…RYLK. 652–659 is an ATP binding site; that stretch reads GVSGSGKS. The C4-type zinc-finger motif lies at 752-778; sequence CEACQGDGLIKIEMHFLPDVYVKCDIC.

This sequence belongs to the ABC transporter superfamily. UvrA family. In terms of assembly, forms a heterotetramer with UvrB during the search for lesions.

It is found in the cytoplasm. Its function is as follows. The UvrABC repair system catalyzes the recognition and processing of DNA lesions. UvrA is an ATPase and a DNA-binding protein. A damage recognition complex composed of 2 UvrA and 2 UvrB subunits scans DNA for abnormalities. When the presence of a lesion has been verified by UvrB, the UvrA molecules dissociate. The protein is UvrABC system protein A of Rickettsia prowazekii (strain Madrid E).